An 89-amino-acid polypeptide reads, in one-letter code: Elongation factor 1-beta (89 aa).

This sequence belongs to the EF-1-beta/EF-1-delta family.

Its function is as follows. Promotes the exchange of GDP for GTP in EF-1-alpha/GDP, thus allowing the regeneration of EF-1-alpha/GTP that could then be used to form the ternary complex EF-1-alpha/GTP/AAtRNA. This is Elongation factor 1-beta from Methanosarcina acetivorans (strain ATCC 35395 / DSM 2834 / JCM 12185 / C2A).